Reading from the N-terminus, the 325-residue chain is Tagatose 1,6-diphosphate aldolase (325 aa).

This sequence belongs to the aldolase LacD family.

It carries out the reaction D-tagatofuranose 1,6-bisphosphate = D-glyceraldehyde 3-phosphate + dihydroxyacetone phosphate. Its pathway is carbohydrate metabolism; D-tagatose 6-phosphate degradation; D-glyceraldehyde 3-phosphate and glycerone phosphate from D-tagatose 6-phosphate: step 2/2. This chain is Tagatose 1,6-diphosphate aldolase, found in Staphylococcus haemolyticus (strain JCSC1435).